Reading from the N-terminus, the 310-residue chain is GMP synthase [glutamine-hydrolyzing] subunit B (310 aa).

Residues 1–187 (MSTSSYIDQI…LGLRTDLQPF (187 aa)) form the GMPS ATP-PPase domain. ATP is bound at residue 27 to 33 (SGGQDSS).

In terms of assembly, heterodimer composed of a glutamine amidotransferase subunit (A) and a GMP-binding subunit (B).

The enzyme catalyses XMP + L-glutamine + ATP + H2O = GMP + L-glutamate + AMP + diphosphate + 2 H(+). It functions in the pathway purine metabolism; GMP biosynthesis; GMP from XMP (L-Gln route): step 1/1. Functionally, catalyzes the synthesis of GMP from XMP. In Thermoplasma acidophilum (strain ATCC 25905 / DSM 1728 / JCM 9062 / NBRC 15155 / AMRC-C165), this protein is GMP synthase [glutamine-hydrolyzing] subunit B (guaAB).